The following is a 1368-amino-acid chain: Inactive tyrosine-protein kinase PRAG1 (1368 aa).

A disordered region spans residues 200–236 (CLKGPRPCTSPQPLRESLPSEDDSDQRCSPSGDSEGG). Tyr-238 is subject to Phosphotyrosine; by CSK. The disordered stretch occupies residues 297-330 (STANPPHLGPKKPSLNSEAASSSDGLSCGSSRSG). Over residues 317-330 (SSSDGLSCGSSRSG) the composition is skewed to low complexity. Phosphotyrosine; by CSK occurs at positions 343 and 391. Disordered regions lie at residues 392–443 (AESA…PNAA), 499–605 (LSSR…GAWS), and 636–792 (HSNS…KKIV). Polar residues predominate over residues 414-434 (VSSGQVWTGDTWSQKTPSGWS). Positions 502–518 (RESHPHNMTENSSKEKP) are enriched in basic and acidic residues. Low complexity-rich tracts occupy residues 522 to 535 (PKLSKSSPGGSPVS) and 550 to 563 (SGSSVGSQPSSRVP). 2 stretches are compositionally biased toward polar residues: residues 564–574 (TNLTSSCQTNG) and 652–666 (SGQNGKTNSGMSKSA). 2 positions are modified to phosphoserine: Ser-667 and Ser-716. 2 stretches are compositionally biased toward polar residues: residues 707–717 (VSQSSAESLSP) and 725–741 (SFTTGSTDSLASDSRTC). Ser-753 and Ser-797 each carry phosphoserine. Disordered regions lie at residues 799 to 818 (PDGFFWTQGSPKPRTASPKL) and 873 to 901 (NSKGGCGSPNLQGRAATSTSSSQLSVSSQ). The span at 887-901 (AATSTSSSQLSVSSQ) shows a compositional bias: low complexity. A required for homodimerization region spans residues 906–949 (SSQLQLHSLLSSISSKEGTYAKLGGLYTQSLARLVTKCEDLFMG). The region spanning 940 to 1291 (VTKCEDLFMG…EAKRVLQCLL (352 aa)) is the Protein kinase domain. Positions 1134–1144 (SSPGPSANPSV) are enriched in polar residues. Positions 1134-1166 (SSPGPSANPSVPTTTSRCPSAAPAATTACQGGP) are disordered. Over residues 1145 to 1162 (PTTTSRCPSAAPAATTAC) the composition is skewed to low complexity. Residues 1293 to 1368 (GPRRELVEQP…LQSLKLLQLL (76 aa)) are required for homodimerization.

Belongs to the protein kinase superfamily. Homodimer. Dimerization leads to the catalytic activation of CSK. Interacts (via C-terminus) with RND2. Interacts with CSK (via SH2 domain) in a Tyr-391 phosphorylation-dependent manner; this interaction potentiates kinase activity of CSK. Interacts with NOTCH1 intracellular domain (N1ICD). Forms a complex with N1ICD and MAML1, in a MAML1-dependent manner. Phosphorylated by CSK on Tyr-238, Tyr-343, and Tyr-391; Tyr-391 is a primary site of phosphorylation. In terms of tissue distribution, highly-expressed in brain, including cortical and hippocampal pyramidal neurons, as well as in kidney, spleen, colon and small intestine.

It localises to the cytoplasm. The protein resides in the nucleus. Its subcellular location is the cell junction. The protein localises to the focal adhesion. Functionally, catalytically inactive protein kinase that acts as a scaffold protein. Functions as an effector of the small GTPase RND2, which stimulates RhoA activity and inhibits NGF-induced neurite outgrowth. Promotes Src family kinase (SFK) signallig by regulating the subcellular localization of CSK, a negative regulator of these kinases, leading to the regulation of cell morphology and motility by a CSK-dependent mechanism. Acts as a critical coactivator of Notch signaling. The chain is Inactive tyrosine-protein kinase PRAG1 from Rattus norvegicus (Rat).